The sequence spans 318 residues: tRNA U34 carboxymethyltransferase (318 aa).

The carboxy-S-adenosyl-L-methionine site is built by lysine 88, tryptophan 102, lysine 107, glycine 126, methionine 192, tyrosine 196, and arginine 311.

Belongs to the class I-like SAM-binding methyltransferase superfamily. CmoB family. Homotetramer.

The catalysed reaction is carboxy-S-adenosyl-L-methionine + 5-hydroxyuridine(34) in tRNA = 5-carboxymethoxyuridine(34) in tRNA + S-adenosyl-L-homocysteine + H(+). Its function is as follows. Catalyzes carboxymethyl transfer from carboxy-S-adenosyl-L-methionine (Cx-SAM) to 5-hydroxyuridine (ho5U) to form 5-carboxymethoxyuridine (cmo5U) at position 34 in tRNAs. The chain is tRNA U34 carboxymethyltransferase from Pseudomonas fluorescens (strain ATCC BAA-477 / NRRL B-23932 / Pf-5).